The primary structure comprises 323 residues: Pseudouridine-5'-phosphate glycosidase (323 aa).

E43 functions as the Proton donor in the catalytic mechanism. Residues K104 and V124 each contribute to the substrate site. D156 provides a ligand contact to Mn(2+). 158–160 contacts substrate; the sequence is SAD. The active-site Nucleophile is the K177.

This sequence belongs to the pseudouridine-5'-phosphate glycosidase family. In terms of assembly, homotrimer. Mn(2+) is required as a cofactor.

It carries out the reaction D-ribose 5-phosphate + uracil = psi-UMP + H2O. Functionally, catalyzes the reversible cleavage of pseudouridine 5'-phosphate (PsiMP) to ribose 5-phosphate and uracil. Functions biologically in the cleavage direction, as part of a pseudouridine degradation pathway. The chain is Pseudouridine-5'-phosphate glycosidase from Streptomyces griseus subsp. griseus (strain JCM 4626 / CBS 651.72 / NBRC 13350 / KCC S-0626 / ISP 5235).